The chain runs to 383 residues: Peroxisomal membrane protein PEX15 (383 aa).

The Cytoplasmic segment spans residues 1 to 331 (MAASEIMNNL…AVLKHHFTRS (331 aa)). A helical membrane pass occupies residues 332–349 (VLNKNGLLLTGLLLLLCL). The Lumenal portion of the chain corresponds to 350–383 (KKYKSLMAIFKHVPAAFHTVYPQIVGLLKLLASI).

Interacts with PEX6. Interacts with PEX19; targets PEX15 to the peroxisome. In terms of processing, phosphorylated.

The protein localises to the peroxisome membrane. The protein resides in the endoplasmic reticulum membrane. Peroxisomal docking factor that anchors PEX1 and PEX6 to peroxisome membranes. PEX26 is therefore required for the formation of the PEX1-PEX6 AAA ATPase complex, a complex that mediates the extraction of the PEX5 receptor from peroxisomal membrane. The sequence is that of Peroxisomal membrane protein PEX15 (PEX15) from Saccharomyces cerevisiae (strain ATCC 204508 / S288c) (Baker's yeast).